Consider the following 207-residue polypeptide: 5-nitrosalicylic acid 1,2-dioxygenase (207 aa).

In terms of domain architecture, Cupin type-2 spans glutamine 85 to isoleucine 151.

It catalyses the reaction 5-nitrosalicylate + O2 = 2-oxo-3-(5-oxofuran-2-ylidene)propanoate + nitrite + H(+). Its function is as follows. Dioxygenase that catalyzes the cleavage of the aromatic ring of 5-nitrosalicylate (5NSA) without prior removal of the nitro group in biodegradation of 5-nitroanthranilate. This Bradyrhizobium sp protein is 5-nitrosalicylic acid 1,2-dioxygenase (naaB).